The chain runs to 545 residues: Threonine--tRNA ligase catalytic subunit (545 aa).

The interval 139–433 (DHRLIGEKLD…LLEHFKGKLP (295 aa)) is catalytic. Zn(2+) contacts are provided by C231, H282, and H410.

It belongs to the class-II aminoacyl-tRNA synthetase family. Homodimer. Probably interacts with its editing subunit. Requires Zn(2+) as cofactor.

Its subcellular location is the cytoplasm. It catalyses the reaction tRNA(Thr) + L-threonine + ATP = L-threonyl-tRNA(Thr) + AMP + diphosphate + H(+). In terms of biological role, catalyzes the attachment of threonine to tRNA(Thr) in a two-step reaction: L-threonine is first activated by ATP to form Thr-AMP and then transferred to the acceptor end of tRNA(Thr). Also activates L-serine and transfers it to tRNA(Thr) but cannot deacylate incorrectly charged amino acid; unlike most archaea the editing function is found in a freestanding protein. The sequence is that of Threonine--tRNA ligase catalytic subunit from Saccharolobus islandicus (strain M.16.27) (Sulfolobus islandicus).